The sequence spans 362 residues: Aminomethyltransferase (362 aa).

This sequence belongs to the GcvT family. In terms of assembly, the glycine cleavage system is composed of four proteins: P, T, L and H.

It carries out the reaction N(6)-[(R)-S(8)-aminomethyldihydrolipoyl]-L-lysyl-[protein] + (6S)-5,6,7,8-tetrahydrofolate = N(6)-[(R)-dihydrolipoyl]-L-lysyl-[protein] + (6R)-5,10-methylene-5,6,7,8-tetrahydrofolate + NH4(+). Its function is as follows. The glycine cleavage system catalyzes the degradation of glycine. The chain is Aminomethyltransferase from Chromobacterium violaceum (strain ATCC 12472 / DSM 30191 / JCM 1249 / CCUG 213 / NBRC 12614 / NCIMB 9131 / NCTC 9757 / MK).